The primary structure comprises 111 residues: X antigen family member 2 (111 aa).

Disordered stretches follow at residues 1–61 and 77–111; these read MSWR…AAEI and KTGDGCEGGTDVKGKILPKAEHFKMPEAGEGKSQV. Residues 86–111 are compositionally biased toward basic and acidic residues; the sequence is TDVKGKILPKAEHFKMPEAGEGKSQV.

It belongs to the GAGE family.

The protein is X antigen family member 2 (XAGE2) of Homo sapiens (Human).